The chain runs to 67 residues: ATP synthase F(0) complex subunit 8 (67 aa).

The helical transmembrane segment at 8 to 24 threads the bilayer; the sequence is TWFTTVLASSITLFILM. Lysine 54 is subject to N6-acetyllysine; alternate. Lysine 54 carries the N6-succinyllysine; alternate modification. Position 57 is an N6-acetyllysine (lysine 57).

It belongs to the ATPase protein 8 family. Component of the ATP synthase complex composed at least of ATP5F1A/subunit alpha, ATP5F1B/subunit beta, ATP5MC1/subunit c (homooctomer), MT-ATP6/subunit a, MT-ATP8/subunit 8, ATP5ME/subunit e, ATP5MF/subunit f, ATP5MG/subunit g, ATP5MK/subunit k, ATP5MJ/subunit j, ATP5F1C/subunit gamma, ATP5F1D/subunit delta, ATP5F1E/subunit epsilon, ATP5PF/subunit F6, ATP5PB/subunit b, ATP5PD/subunit d, ATP5PO/subunit OSCP. ATP synthase complex consists of a soluble F(1) head domain (subunits alpha(3) and beta(3)) - the catalytic core - and a membrane F(0) domain - the membrane proton channel (subunits c, a, 8, e, f, g, k and j). These two domains are linked by a central stalk (subunits gamma, delta, and epsilon) rotating inside the F1 region and a stationary peripheral stalk (subunits F6, b, d, and OSCP). Interacts with PRICKLE3.

Its subcellular location is the mitochondrion membrane. Subunit 8, of the mitochondrial membrane ATP synthase complex (F(1)F(0) ATP synthase or Complex V) that produces ATP from ADP in the presence of a proton gradient across the membrane which is generated by electron transport complexes of the respiratory chain. ATP synthase complex consist of a soluble F(1) head domain - the catalytic core - and a membrane F(1) domain - the membrane proton channel. These two domains are linked by a central stalk rotating inside the F(1) region and a stationary peripheral stalk. During catalysis, ATP synthesis in the catalytic domain of F(1) is coupled via a rotary mechanism of the central stalk subunits to proton translocation. In vivo, can only synthesize ATP although its ATP hydrolase activity can be activated artificially in vitro. Part of the complex F(0) domain. This chain is ATP synthase F(0) complex subunit 8, found in Cricetulus griseus (Chinese hamster).